The sequence spans 212 residues: Protein-L-isoaspartate O-methyltransferase (212 aa).

The active site involves S56.

It belongs to the methyltransferase superfamily. L-isoaspartyl/D-aspartyl protein methyltransferase family.

It is found in the cytoplasm. The catalysed reaction is [protein]-L-isoaspartate + S-adenosyl-L-methionine = [protein]-L-isoaspartate alpha-methyl ester + S-adenosyl-L-homocysteine. Catalyzes the methyl esterification of L-isoaspartyl residues in peptides and proteins that result from spontaneous decomposition of normal L-aspartyl and L-asparaginyl residues. It plays a role in the repair and/or degradation of damaged proteins. This is Protein-L-isoaspartate O-methyltransferase from Myxococcus xanthus (strain DK1622).